The sequence spans 120 residues: Large ribosomal subunit protein uL18 (120 aa).

This sequence belongs to the universal ribosomal protein uL18 family. In terms of assembly, part of the 50S ribosomal subunit; part of the 5S rRNA/L5/L18/L25 subcomplex. Contacts the 5S and 23S rRNAs.

In terms of biological role, this is one of the proteins that bind and probably mediate the attachment of the 5S RNA into the large ribosomal subunit, where it forms part of the central protuberance. The chain is Large ribosomal subunit protein uL18 from Rhodospirillum rubrum (strain ATCC 11170 / ATH 1.1.1 / DSM 467 / LMG 4362 / NCIMB 8255 / S1).